The sequence spans 361 residues: Mannonate dehydratase 1 (361 aa).

The protein belongs to the mannonate dehydratase family. Fe(2+) is required as a cofactor. Requires Mn(2+) as cofactor.

The enzyme catalyses D-mannonate = 2-dehydro-3-deoxy-D-gluconate + H2O. It participates in carbohydrate metabolism; pentose and glucuronate interconversion. Catalyzes the dehydration of D-mannonate. The sequence is that of Mannonate dehydratase 1 (uxuA1) from Halalkalibacterium halodurans (strain ATCC BAA-125 / DSM 18197 / FERM 7344 / JCM 9153 / C-125) (Bacillus halodurans).